The sequence spans 47 residues: Photosystem II reaction center protein Psb30 (47 aa).

Residues 19 to 39 traverse the membrane as a helical segment; the sequence is VIFQLLSVALIVIAGPVVIFL.

The protein belongs to the Psb30/Ycf12 family. PSII is composed of 1 copy each of membrane proteins PsbA, PsbB, PsbC, PsbD, PsbE, PsbF, PsbH, PsbI, PsbJ, PsbK, PsbL, PsbM, PsbT, PsbX, PsbY, PsbZ, Psb30/Ycf12, peripheral proteins PsbO, CyanoQ (PsbQ), PsbU, PsbV and a large number of cofactors. It forms dimeric complexes.

The protein resides in the cellular thylakoid membrane. A core subunit of photosystem II (PSII), probably helps stabilize the reaction center. The sequence is that of Photosystem II reaction center protein Psb30 from Nostoc punctiforme (strain ATCC 29133 / PCC 73102).